A 377-amino-acid chain; its full sequence is Protein RecA (377 aa).

Residue 76-83 (GPESSGKT) coordinates ATP. Residues 346–377 (TNGNNGEDHEGTEPVEIEAEDAAPKKGKKGKH) form a disordered region.

The protein belongs to the RecA family.

The protein localises to the cytoplasm. In terms of biological role, can catalyze the hydrolysis of ATP in the presence of single-stranded DNA, the ATP-dependent uptake of single-stranded DNA by duplex DNA, and the ATP-dependent hybridization of homologous single-stranded DNAs. It interacts with LexA causing its activation and leading to its autocatalytic cleavage. In Bdellovibrio bacteriovorus (strain ATCC 15356 / DSM 50701 / NCIMB 9529 / HD100), this protein is Protein RecA.